The sequence spans 332 residues: Tryptophan--tRNA ligase (332 aa).

Residues 11-13 and 19-20 contribute to the ATP site; these read TST and GN. Residues 12 to 20 carry the 'HIGH' region motif; the sequence is STGKLTLGN. Residue D140 coordinates L-tryptophan. ATP-binding positions include 152 to 154, I191, and 200 to 204; these read GQD and KMSKS. The 'KMSKS' region signature appears at 200–204; sequence KMSKS.

It belongs to the class-I aminoacyl-tRNA synthetase family. As to quaternary structure, homodimer.

Its subcellular location is the cytoplasm. It carries out the reaction tRNA(Trp) + L-tryptophan + ATP = L-tryptophyl-tRNA(Trp) + AMP + diphosphate + H(+). In terms of biological role, catalyzes the attachment of tryptophan to tRNA(Trp). This is Tryptophan--tRNA ligase from Mycoplasmopsis pulmonis (strain UAB CTIP) (Mycoplasma pulmonis).